The primary structure comprises 348 residues: [FeFe] hydrogenase maturase subunit HydE (348 aa).

One can recognise a Radical SAM core domain in the interval 49–268 (DEVHIRAIIE…LLPDSNIPAT (220 aa)). Residues cysteine 63, cysteine 67, and cysteine 70 each coordinate [4Fe-4S] cluster. [2Fe-2S] cluster-binding residues include cysteine 311, cysteine 319, and cysteine 322.

Belongs to the radical SAM superfamily. HydE family. Monomer. The cofactor is [4Fe-4S] cluster. [2Fe-2S] cluster is required as a cofactor.

Its function is as follows. Required for the maturation of the [FeFe]-hydrogenase HydA. Catalyzes the reductive cleavage of S-adenosyl-L-methionine (in vitro), suggesting it may contribute to the biosynthesis of an essential sulfur-containing ligand that binds to the hydrogenase active site [2Fe-2S] cluster. This is [FeFe] hydrogenase maturase subunit HydE from Thermotoga maritima (strain ATCC 43589 / DSM 3109 / JCM 10099 / NBRC 100826 / MSB8).